Here is a 238-residue protein sequence, read N- to C-terminus: Purine nucleoside phosphorylase DeoD-type (238 aa).

Histidine 5 provides a ligand contact to a purine D-ribonucleoside. Residues glycine 21, arginine 25, arginine 44, and 88-91 (RIGS) contribute to the phosphate site. A purine D-ribonucleoside contacts are provided by residues 180–182 (EME) and 204–205 (SD). The active-site Proton donor is the aspartate 205.

Belongs to the PNP/UDP phosphorylase family. As to quaternary structure, homohexamer; trimer of homodimers.

It carries out the reaction a purine D-ribonucleoside + phosphate = a purine nucleobase + alpha-D-ribose 1-phosphate. The catalysed reaction is a purine 2'-deoxy-D-ribonucleoside + phosphate = a purine nucleobase + 2-deoxy-alpha-D-ribose 1-phosphate. Functionally, catalyzes the reversible phosphorolytic breakdown of the N-glycosidic bond in the beta-(deoxy)ribonucleoside molecules, with the formation of the corresponding free purine bases and pentose-1-phosphate. In Xenorhabdus nematophila (strain ATCC 19061 / DSM 3370 / CCUG 14189 / LMG 1036 / NCIMB 9965 / AN6), this protein is Purine nucleoside phosphorylase DeoD-type.